We begin with the raw amino-acid sequence, 120 residues long: Large ribosomal subunit protein uL18 (120 aa).

As to quaternary structure, part of the 50S ribosomal subunit; part of the 5S rRNA/L5/L18/L25 subcomplex. Contacts the 5S and 23S rRNAs.

Functionally, this is one of the proteins that bind and probably mediate the attachment of the 5S RNA into the large ribosomal subunit, where it forms part of the central protuberance. The sequence is that of Large ribosomal subunit protein uL18 from Rhodopseudomonas palustris (strain ATCC BAA-98 / CGA009).